The chain runs to 906 residues: Protein translocase subunit SecA (906 aa).

ATP-binding positions include Q86, 104-108 (GEGKT), and D511. Composition is skewed to basic and acidic residues over residues 853–865 (HESV…RHDE) and 877–888 (VRREGPKVKRND). The disordered stretch occupies residues 853–906 (HESVIDNNQRHDEDEQEEAPKVQQVRREGPKVKRNDPCPCGSGKKYKQCHGKVE). C890, C892, C901, and H902 together coordinate Zn(2+). The segment covering 896–906 (KKYKQCHGKVE) has biased composition (basic residues).

The protein belongs to the SecA family. As to quaternary structure, monomer and homodimer. Part of the essential Sec protein translocation apparatus which comprises SecA, SecYEG and auxiliary proteins SecDF-YajC and YidC. Requires Zn(2+) as cofactor.

Its subcellular location is the cell inner membrane. The protein resides in the cytoplasm. It catalyses the reaction ATP + H2O + cellular proteinSide 1 = ADP + phosphate + cellular proteinSide 2.. Functionally, part of the Sec protein translocase complex. Interacts with the SecYEG preprotein conducting channel. Has a central role in coupling the hydrolysis of ATP to the transfer of proteins into and across the cell membrane, serving both as a receptor for the preprotein-SecB complex and as an ATP-driven molecular motor driving the stepwise translocation of polypeptide chains across the membrane. In Francisella tularensis subsp. holarctica (strain OSU18), this protein is Protein translocase subunit SecA.